The primary structure comprises 408 residues: Succinylornithine transaminase (408 aa).

Lys-252 bears the N6-(pyridoxal phosphate)lysine mark.

The protein belongs to the class-III pyridoxal-phosphate-dependent aminotransferase family. AstC subfamily. Requires pyridoxal 5'-phosphate as cofactor.

The enzyme catalyses N(2)-succinyl-L-ornithine + 2-oxoglutarate = N-succinyl-L-glutamate 5-semialdehyde + L-glutamate. It functions in the pathway amino-acid degradation; L-arginine degradation via AST pathway; L-glutamate and succinate from L-arginine: step 3/5. In terms of biological role, catalyzes the transamination of N(2)-succinylornithine and alpha-ketoglutarate into N(2)-succinylglutamate semialdehyde and glutamate. Can also act as an acetylornithine aminotransferase. The chain is Succinylornithine transaminase from Salmonella enteritidis PT4 (strain P125109).